The following is a 126-amino-acid chain: Glycine cleavage system H protein (126 aa).

Residues 23–104 (KVRVGITDFA…YDEGWMIEII (82 aa)) enclose the Lipoyl-binding domain. Position 64 is an N6-lipoyllysine (lysine 64).

Belongs to the GcvH family. In terms of assembly, the glycine cleavage system is composed of four proteins: P, T, L and H. (R)-lipoate is required as a cofactor.

The glycine cleavage system catalyzes the degradation of glycine. The H protein shuttles the methylamine group of glycine from the P protein to the T protein. This is Glycine cleavage system H protein from Chlorobium phaeobacteroides (strain BS1).